The primary structure comprises 312 residues: Tumor necrosis factor receptor type 1-associated DEATH domain protein (312 aa).

The Nuclear export signal motif lies at 147–163 (LRDEELTELENALRNLT). Positions 166–200 (SAGGQGSDVQGTPAPLQSLAPSPPEEKPPPPQPGQ) are disordered. The Death domain maps to 215 to 305 (NLQDQQKFAR…SLAEDLLGLA (91 aa)). Positions 222-289 (FARSVGLKWR…ATLQRLVEAL (68 aa)) are interaction with KRT14 and KRT18. The Nuclear localization signal signature appears at 231–244 (RKVGRSLQRSCRAL).

Stimulation of TNF-alpha receptor TNFRSF1A leads to the formation of two distinct signaling complexes. Plasma membrane-bound complex I is composed of TNFRSF1A, TRADD, RIPK1, TRAF2 and BIRC2/c-IAP1 or BIRC3 which interacts with CHUCK/IKK-alpha, IKBKB/IKK-beta and IKBKG/IKK-gamma promoting cell survival. Subsequently, TRADD, RIPK1 and TRAF2 dissociate from TNFRSF1A and form cytoplasmic complex II with FADD and caspase CASP8 promoting cell apoptosis. Within complex I, interacts with TNFRSF1A/TNFR1, TRAF2 and kinase RIPK1. Within complex I, interacts with TRPC4AP; the interaction promotes NF-kappa B activation. UXT1 associates with complex I; the interaction prevents the formation of complex II. Within complex I Interacts with scaffold protein DAB2IP. Interacts with autophagy receptor SQSTM1. Interacts with E3 ligase TRIP12. Interacts with kinase HIPK2. Interacts with keratin KRT14. Interacts with keratin KRT18. Interacts with keratins KRT16 and KRT17. Interacts with FADD. Interacts with TOMM70. Interacts with TMC8; the interaction impairs the formation of complex I and facilites complex II formation.

The protein resides in the nucleus. The protein localises to the cytoplasm. It localises to the cytoskeleton. Functionally, adapter molecule for TNFRSF1A/TNFR1 that specifically associates with the cytoplasmic domain of activated TNFRSF1A/TNFR1 mediating its interaction with FADD. Overexpression of TRADD leads to two major TNF-induced responses, apoptosis and activation of NF-kappa-B. The nuclear form acts as a tumor suppressor by preventing ubiquitination and degradation of isoform p19ARF/ARF of CDKN2A by TRIP12: acts by interacting with TRIP12, leading to disrupt interaction between TRIP12 and isoform p19ARF/ARF of CDKN2A. The sequence is that of Tumor necrosis factor receptor type 1-associated DEATH domain protein from Bos taurus (Bovine).